The following is a 73-amino-acid chain: MTLVGKLVHISIDLVLVSTCLAGIKRNTGLTPKLETLDNQTMRNYMKRYLNLGESVYDYSVATCGSSTYFARK.

It belongs to the ?ATG44? family. As to quaternary structure, homooligomer. Found as homooctamer in solution, but binds to membranes either as a monomer, dimer, or tetramer, not as an octamer.

It is found in the mitochondrion intermembrane space. The protein localises to the vacuole. Its function is as follows. Mitochondrial fission factor that acts directly on lipid membranes to drive mitochondrial fission required for mitophagy. Directly binds to lipid membranes and brings about lipid membrane fragility to facilitate membrane fission and engulfment of mitochondria by the phagophore. In Saccharomyces cerevisiae (strain ATCC 204508 / S288c) (Baker's yeast), this protein is Mitofissin.